The primary structure comprises 350 residues: Legumin K (350 aa).

Disordered regions lie at residues 37-86 (LGGN…GNSV) and 102-170 (EEDT…RKNG). Basic and acidic residues-rich tracts occupy residues 104–118 (DTAK…ERSQ), 141–150 (EQSHSHSHRE), and 160–170 (EKQRSEERKNG). A Cupin type-1 domain is found at 182-329 (ENIADAAGAD…AFGLRQRQVT (148 aa)).

This sequence belongs to the 11S seed storage protein (globulins) family. In terms of assembly, hexamer; each subunit is composed of an acidic and a basic chain derived from a single precursor and linked by a disulfide bond.

This protein found in the seeds of many leguminous and non-leguminous plants is the source of sulfur-containing amino acids in seed meals. The sequence is that of Legumin K (LEGK) from Pisum sativum (Garden pea).